The chain runs to 86 residues: YcgL domain-containing protein XCC3997 (86 aa).

Residues 1–83 (MHAYVYKSQR…PKTVVLAGEC (83 aa)) form the YcgL domain.

In Xanthomonas campestris pv. campestris (strain ATCC 33913 / DSM 3586 / NCPPB 528 / LMG 568 / P 25), this protein is YcgL domain-containing protein XCC3997.